The primary structure comprises 546 residues: Chaperonin GroEL (546 aa).

ATP-binding positions include 29 to 32 (TMGP), K50, 86 to 90 (DGTTT), G414, and D492.

The protein belongs to the chaperonin (HSP60) family. Forms a cylinder of 14 subunits composed of two heptameric rings stacked back-to-back. Interacts with the co-chaperonin GroES.

The protein resides in the cytoplasm. The catalysed reaction is ATP + H2O + a folded polypeptide = ADP + phosphate + an unfolded polypeptide.. Functionally, together with its co-chaperonin GroES, plays an essential role in assisting protein folding. The GroEL-GroES system forms a nano-cage that allows encapsulation of the non-native substrate proteins and provides a physical environment optimized to promote and accelerate protein folding. The chain is Chaperonin GroEL from Helicobacter pylori (strain G27).